A 528-amino-acid polypeptide reads, in one-letter code: Folylpolyglutamate synthase (528 aa).

An ATP-binding site is contributed by 104–107 (GKGG). Residues Ser-134, Glu-208, and His-236 each contribute to the Mg(2+) site. Positions 351 and 365 each coordinate ATP.

It belongs to the folylpolyglutamate synthase family. A monovalent cation is required as a cofactor.

It localises to the mitochondrion inner membrane. It is found in the mitochondrion matrix. The protein resides in the cytoplasm. The enzyme catalyses (6S)-5,6,7,8-tetrahydrofolyl-(gamma-L-Glu)(n) + L-glutamate + ATP = (6S)-5,6,7,8-tetrahydrofolyl-(gamma-L-Glu)(n+1) + ADP + phosphate + H(+). It participates in cofactor biosynthesis; tetrahydrofolylpolyglutamate biosynthesis. Its function is as follows. Catalyzes conversion of folates to polyglutamate derivatives allowing concentration of folate compounds in the cell and the intracellular retention of these cofactors, which are important substrates for most of the folate-dependent enzymes that are involved in one-carbon transfer reactions involved in purine, pyrimidine and amino acid synthesis. This is Folylpolyglutamate synthase (met-6) from Neurospora crassa (strain ATCC 24698 / 74-OR23-1A / CBS 708.71 / DSM 1257 / FGSC 987).